The sequence spans 161 residues: Nucleotide-binding protein Geob_0921 (161 aa).

This sequence belongs to the YajQ family.

Its function is as follows. Nucleotide-binding protein. The sequence is that of Nucleotide-binding protein Geob_0921 from Geotalea daltonii (strain DSM 22248 / JCM 15807 / FRC-32) (Geobacter daltonii).